Reading from the N-terminus, the 316-residue chain is Ribosomal RNA small subunit methyltransferase H (316 aa).

S-adenosyl-L-methionine is bound by residues 35 to 37 (GGH), D55, F79, D101, and Q108.

Belongs to the methyltransferase superfamily. RsmH family.

The protein resides in the cytoplasm. It catalyses the reaction cytidine(1402) in 16S rRNA + S-adenosyl-L-methionine = N(4)-methylcytidine(1402) in 16S rRNA + S-adenosyl-L-homocysteine + H(+). Its function is as follows. Specifically methylates the N4 position of cytidine in position 1402 (C1402) of 16S rRNA. The sequence is that of Ribosomal RNA small subunit methyltransferase H from Aliivibrio salmonicida (strain LFI1238) (Vibrio salmonicida (strain LFI1238)).